A 153-amino-acid polypeptide reads, in one-letter code: NADPH-dependent 7-cyano-7-deazaguanine reductase (153 aa).

Cys-51 acts as the Thioimide intermediate in catalysis. Asp-58 acts as the Proton donor in catalysis. Substrate is bound by residues 73-75 (VES) and 92-93 (HE).

The protein belongs to the GTP cyclohydrolase I family. QueF type 1 subfamily.

The protein localises to the cytoplasm. It carries out the reaction 7-aminomethyl-7-carbaguanine + 2 NADP(+) = 7-cyano-7-deazaguanine + 2 NADPH + 3 H(+). The protein operates within tRNA modification; tRNA-queuosine biosynthesis. Functionally, catalyzes the NADPH-dependent reduction of 7-cyano-7-deazaguanine (preQ0) to 7-aminomethyl-7-deazaguanine (preQ1). This Granulibacter bethesdensis (strain ATCC BAA-1260 / CGDNIH1) protein is NADPH-dependent 7-cyano-7-deazaguanine reductase.